The primary structure comprises 146 residues: Hemoglobin subunit beta (146 aa).

N-acetylvaline is present on Val1. In terms of domain architecture, Globin spans 2-146 (HLTPEEKVAV…VANALAHKYH (145 aa)). Thr12 is modified (phosphothreonine). Ser44 bears the Phosphoserine mark. N6-acetyllysine is present on Lys59. Heme b is bound at residue His63. An N6-acetyllysine modification is found at Lys82. His92 lines the heme b pocket. The residue at position 93 (Cys93) is an S-nitrosocysteine. Lys144 carries the N6-acetyllysine modification.

Belongs to the globin family. In terms of assembly, heterotetramer of two alpha chains and two beta chains. Red blood cells.

Involved in oxygen transport from the lung to the various peripheral tissues. This chain is Hemoglobin subunit beta (HBB), found in Cercocebus atys (Sooty mangabey).